Here is a 250-residue protein sequence, read N- to C-terminus: tRNA (guanine-N(1)-)-methyltransferase (250 aa).

S-adenosyl-L-methionine is bound by residues Gly116 and 136–141 (IGDYVL).

It belongs to the RNA methyltransferase TrmD family. Homodimer.

It is found in the cytoplasm. The enzyme catalyses guanosine(37) in tRNA + S-adenosyl-L-methionine = N(1)-methylguanosine(37) in tRNA + S-adenosyl-L-homocysteine + H(+). Functionally, specifically methylates guanosine-37 in various tRNAs. The chain is tRNA (guanine-N(1)-)-methyltransferase from Pseudomonas putida (strain ATCC 47054 / DSM 6125 / CFBP 8728 / NCIMB 11950 / KT2440).